The sequence spans 168 residues: Photosystem I assembly protein Ycf3 (168 aa).

TPR repeat units follow at residues 35 to 68 (AFTY…EIDP), 72 to 105 (SYIL…NPFL), and 120 to 153 (GEQA…TPGN).

It belongs to the Ycf3 family. In terms of assembly, interacts with Y3IP1.

Its subcellular location is the plastid. It is found in the chloroplast thylakoid membrane. Functionally, essential for the assembly of the photosystem I (PSI) complex. May act as a chaperone-like factor to guide the assembly of the PSI subunits. This is Photosystem I assembly protein Ycf3 from Arabidopsis thaliana (Mouse-ear cress).